The following is a 279-amino-acid chain: uncharacterized protein (279 aa).

The first 19 residues, M1–A19, serve as a signal peptide directing secretion. C20 carries the N-palmitoyl cysteine lipid modification. C20 carries S-diacylglycerol cysteine lipidation.

It belongs to the MG439/MG440 family.

The protein localises to the cell membrane. This is an uncharacterized protein from Mycoplasma pneumoniae (strain ATCC 29342 / M129 / Subtype 1) (Mycoplasmoides pneumoniae).